The sequence spans 373 residues: Putative glutamate--cysteine ligase 2-2 (373 aa).

This sequence belongs to the glutamate--cysteine ligase type 2 family. YbdK subfamily.

The enzyme catalyses L-cysteine + L-glutamate + ATP = gamma-L-glutamyl-L-cysteine + ADP + phosphate + H(+). Its function is as follows. ATP-dependent carboxylate-amine ligase which exhibits weak glutamate--cysteine ligase activity. This Legionella pneumophila (strain Corby) protein is Putative glutamate--cysteine ligase 2-2.